The sequence spans 151 residues: UPF0178 protein YaiI (151 aa).

This sequence belongs to the UPF0178 family.

This Salmonella paratyphi C (strain RKS4594) protein is UPF0178 protein YaiI.